The sequence spans 376 residues: UDP-N-acetylglucosamine--N-acetylmuramyl-(pentapeptide) pyrophosphoryl-undecaprenol N-acetylglucosamine transferase (376 aa).

UDP-N-acetyl-alpha-D-glucosamine contacts are provided by residues 12–14 (TAG), asparagine 126, arginine 163, serine 198, and glutamine 296.

This sequence belongs to the glycosyltransferase 28 family. MurG subfamily.

It localises to the cell membrane. The enzyme catalyses di-trans,octa-cis-undecaprenyl diphospho-N-acetyl-alpha-D-muramoyl-L-alanyl-D-glutamyl-meso-2,6-diaminopimeloyl-D-alanyl-D-alanine + UDP-N-acetyl-alpha-D-glucosamine = di-trans,octa-cis-undecaprenyl diphospho-[N-acetyl-alpha-D-glucosaminyl-(1-&gt;4)]-N-acetyl-alpha-D-muramoyl-L-alanyl-D-glutamyl-meso-2,6-diaminopimeloyl-D-alanyl-D-alanine + UDP + H(+). Its pathway is cell wall biogenesis; peptidoglycan biosynthesis. Functionally, cell wall formation. Catalyzes the transfer of a GlcNAc subunit on undecaprenyl-pyrophosphoryl-MurNAc-pentapeptide (lipid intermediate I) to form undecaprenyl-pyrophosphoryl-MurNAc-(pentapeptide)GlcNAc (lipid intermediate II). The polypeptide is UDP-N-acetylglucosamine--N-acetylmuramyl-(pentapeptide) pyrophosphoryl-undecaprenol N-acetylglucosamine transferase (Frankia casuarinae (strain DSM 45818 / CECT 9043 / HFP020203 / CcI3)).